The sequence spans 229 residues: Demethylmenaquinone methyltransferase (229 aa).

S-adenosyl-L-methionine is bound by residues Thr62, Asp80, 100–101 (DG), and Ser117.

Belongs to the class I-like SAM-binding methyltransferase superfamily. MenG/UbiE family.

It carries out the reaction a 2-demethylmenaquinol + S-adenosyl-L-methionine = a menaquinol + S-adenosyl-L-homocysteine + H(+). Its pathway is quinol/quinone metabolism; menaquinone biosynthesis; menaquinol from 1,4-dihydroxy-2-naphthoate: step 2/2. In terms of biological role, methyltransferase required for the conversion of demethylmenaquinol (DMKH2) to menaquinol (MKH2). This chain is Demethylmenaquinone methyltransferase, found in Corynebacterium kroppenstedtii (strain DSM 44385 / JCM 11950 / CIP 105744 / CCUG 35717).